The primary structure comprises 296 residues: 4-hydroxybenzoate octaprenyltransferase (296 aa).

8 helical membrane passes run 28-48 (PIGI…AGNG), 52-72 (LANV…GCCI), 102-122 (ALTL…CTNS), 145-167 (TYYP…FTAA), 174-196 (GAWL…YAMV), 219-239 (SIIL…GSRF), 241-261 (LGGW…WEYW), and 275-295 (FLHN…DYAL).

Belongs to the UbiA prenyltransferase family. It depends on Mg(2+) as a cofactor.

The protein localises to the cell inner membrane. The catalysed reaction is all-trans-octaprenyl diphosphate + 4-hydroxybenzoate = 4-hydroxy-3-(all-trans-octaprenyl)benzoate + diphosphate. It participates in cofactor biosynthesis; ubiquinone biosynthesis. Its function is as follows. Catalyzes the prenylation of para-hydroxybenzoate (PHB) with an all-trans polyprenyl group. Mediates the second step in the final reaction sequence of ubiquinone-8 (UQ-8) biosynthesis, which is the condensation of the polyisoprenoid side chain with PHB, generating the first membrane-bound Q intermediate 3-octaprenyl-4-hydroxybenzoate. In Pseudomonas putida (strain ATCC 700007 / DSM 6899 / JCM 31910 / BCRC 17059 / LMG 24140 / F1), this protein is 4-hydroxybenzoate octaprenyltransferase.